A 365-amino-acid chain; its full sequence is MSPSDRIPPGVWNAIDYERLAPQAMDAGRHAYVAGGCGWDATVAANRAAFAGWAVLPRLLRDVRAGHTRLQLAGMDLPHPLLLAPVAHQRLAHPDAEIATARAAQATGSCLVASTLSSCTLEDIAAASGPARWFQLYLQPEREHSLDLLRRAEAAGYRAIVLTLDASIQLASRGALQAGFAMPADCVSANLARYPQPAPAQPAAGESRIFQGAMRHAPRWDDLRWLLASTRLPVWIKGVLHPEDARELQAAGAAGLIVSNHGGRSLDGAPASLRMLPALRTAVGAGYPLLLDGGVRSGQDAFKALALGADAVLVGRLQVYALAVAGALGVAHMLQMLVEELHACMAQAGCARLSDITHDTLTPSC.

Positions 6 to 365 (RIPPGVWNAI…ITHDTLTPSC (360 aa)) constitute an FMN hydroxy acid dehydrogenase domain. Tyr-32 is a binding site for pyruvate. FMN is bound by residues 85-87 (PVA), Ser-114, and Gln-135. Residue Tyr-137 participates in pyruvate binding. FMN-binding residues include Thr-163, Lys-237, and Ser-259. Residues His-261 and Arg-264 each coordinate pyruvate. The Proton acceptor role is filled by His-261. FMN contacts are provided by residues 292–296 (DGGVR) and Arg-316.

The protein belongs to the FMN-dependent alpha-hydroxy acid dehydrogenase family. As to quaternary structure, homotetramer. The cofactor is FMN.

It catalyses the reaction (S)-lactate + O2 = pyruvate + H2O2. The catalysed reaction is glycolate + O2 = glyoxylate + H2O2. Functionally, catalyzes the oxidation of (S)-lactate (L-lactate) to pyruvate, with a reduction of O2 to H2O2. To a lesser extent is also able to use glycolate as substrate. The polypeptide is L-lactate oxidase (Alicycliphilus denitrificans (strain DSM 14773 / CIP 107495 / K601)).